The primary structure comprises 382 residues: V-type proton ATPase subunit C 1 (382 aa).

Position 2 is an N-acetylthreonine (T2).

The protein belongs to the V-ATPase C subunit family. In terms of assembly, V-ATPase is a heteromultimeric enzyme made up of two complexes: the ATP-hydrolytic V1 complex and the proton translocation V0 complex. The V1 complex consists of three catalytic AB heterodimers that form a heterohexamer, three peripheral stalks each consisting of EG heterodimers, one central rotor including subunits D and F, and the regulatory subunits C and H. The proton translocation complex V0 consists of the proton transport subunit a, a ring of proteolipid subunits c9c'', rotary subunit d, subunits e and f, and the accessory subunits ATP6AP1/Ac45 and ATP6AP2/PRR. Expressed in brain (at protein level).

Its subcellular location is the cytoplasmic vesicle. It is found in the secretory vesicle. It localises to the synaptic vesicle membrane. The protein resides in the clathrin-coated vesicle membrane. In terms of biological role, subunit of the V1 complex of vacuolar(H+)-ATPase (V-ATPase), a multisubunit enzyme composed of a peripheral complex (V1) that hydrolyzes ATP and a membrane integral complex (V0) that translocates protons. V-ATPase is responsible for acidifying and maintaining the pH of intracellular compartments and in some cell types, is targeted to the plasma membrane, where it is responsible for acidifying the extracellular environment. Subunit C is necessary for the assembly of the catalytic sector of the enzyme and is likely to have a specific function in its catalytic activity. This Bos taurus (Bovine) protein is V-type proton ATPase subunit C 1 (ATP6V1C1).